A 604-amino-acid chain; its full sequence is Prostaglandin G/H synthase 2 (604 aa).

The N-terminal stretch at 1–17 is a signal peptide; the sequence is MLARAGLLCASLSPPHA. The region spanning 18–55 is the EGF-like domain; that stretch reads ANPCCSNPCQNQGVCMSIGFDQYMCDCSRTGFYGENCS. 4 disulfide bridges follow: Cys21–Cys32, Cys22–Cys145, Cys26–Cys42, and Cys44–Cys54. Asn53 carries N-linked (GlcNAc...) asparagine glycosylation. Residue Arg106 participates in substrate binding. N-linked (GlcNAc...) asparagine glycosylation is present at Asn130. His193 functions as the Proton acceptor in the catalytic mechanism. Tyr341 provides a ligand contact to substrate. The active-site For cyclooxygenase activity is the Tyr371. His374 contacts heme b. A glycan (N-linked (GlcNAc...) asparagine) is linked at Asn396. Cys526 bears the S-nitrosocysteine mark. Cysteines 555 and 561 form a disulfide. N-linked (GlcNAc...) asparagine glycosylation is present at Asn580.

The protein belongs to the prostaglandin G/H synthase family. In terms of assembly, homodimer. It depends on heme b as a cofactor. Post-translationally, S-nitrosylation by NOS2 (iNOS) activates enzyme activity. S-nitrosylation may take place on different Cys residues in addition to Cys-526.

The protein localises to the microsome membrane. It localises to the endoplasmic reticulum membrane. It is found in the nucleus inner membrane. Its subcellular location is the nucleus outer membrane. It catalyses the reaction (5Z,8Z,11Z,14Z)-eicosatetraenoate + AH2 + 2 O2 = prostaglandin H2 + A + H2O. The catalysed reaction is (5Z,8Z,11Z,14Z)-eicosatetraenoate + 2 O2 = prostaglandin G2. It carries out the reaction prostaglandin G2 + AH2 = prostaglandin H2 + A + H2O. The enzyme catalyses (5Z,8Z,11Z,14Z,17Z)-eicosapentaenoate + 2 O2 = prostaglandin G3. It catalyses the reaction prostaglandin G3 + AH2 = prostaglandin H3 + A + H2O. The catalysed reaction is (8Z,11Z,14Z)-eicosatrienoate + 2 O2 = prostaglandin G1. It carries out the reaction prostaglandin G1 + AH2 = prostaglandin H1 + A + H2O. The enzyme catalyses 2-(5Z,8Z,11Z,14Z)-eicosatetraenoyl-sn-glycero-3-phosphoethanolamine + 2 O2 = 2-(prostaglandin G2)-sn-glycero-3-phosphoethanolamine. It catalyses the reaction 2-(prostaglandin G2)-sn-glycero-3-phosphoethanolamine + AH2 = 2-(prostaglandin H2)-sn-glycero-3-phosphoethanolamine + A + H2O. The catalysed reaction is 2-(5Z,8Z,11Z,14Z)-eicosatetraenoyl-sn-glycero-3-phosphocholine + 2 O2 = 2-(prostaglandin G2)-sn-glycero-3-phosphocholine. It carries out the reaction 2-(prostaglandin G2)-sn-glycero-3-phosphocholine + AH2 = 2-(prostaglandin H2)-sn-glycero-3-phosphocholine + A + H2O. The enzyme catalyses (15S)-hydroperoxy-(5Z,8Z,11Z,13E)-eicosatetraenoate + AH2 = (15S)-hydroxy-(5Z,8Z,11Z,13E)-eicosatetraenoate + A + H2O. It catalyses the reaction 2-(5Z,8Z,11Z,14Z)-eicosatetraenoyl-sn-glycero-3-phosphocholine + AH2 + O2 = 2-[(15S)-hydroxy-(5Z,8Z,11Z,13E)-eicosatetraenoyl]-sn-glycero-3-phosphocholine + A + H2O. The catalysed reaction is 2-(5Z,8Z,11Z,14Z)-eicosatetraenoyl-sn-glycero-3-phosphocholine + AH2 + O2 = 2-[(15R)-hydroxy-(5Z,8Z,11Z,13E)-eicosatetraenoyl]-sn-glycero-3-phosphocholine + A + H2O. It carries out the reaction 2-(5Z,8Z,11Z,14Z)-eicosatetraenoyl-sn-glycero-3-phosphocholine + AH2 + O2 = 2-[(11R)-hydroxy-(5Z,8Z,12E,14Z)-eicosatetraenoyl]-sn-glycero-3-phosphocholine + A + H2O. The enzyme catalyses (9Z,12Z)-octadecadienoate + AH2 + O2 = 9-hydroxy-(10E,12Z)-octadecadienoate + A + H2O. It catalyses the reaction (9Z,12Z)-octadecadienoate + AH2 + O2 = 13-hydroxy-(9Z,11E)-octadecadienoate + A + H2O. The catalysed reaction is (5Z,8Z,11Z,14Z)-eicosatetraenoate + AH2 + O2 = (15R)-hydroxy-(5Z,8Z,11Z,13E)-eicosatetraenoate + A + H2O. It carries out the reaction (5Z,8Z,11Z,14Z)-eicosatetraenoate + AH2 + O2 = (11R)-hydroxy-(5Z,8Z,12E,14Z)-eicosatetraenoate + A + H2O. The enzyme catalyses (5Z,8Z,11Z,14Z,17Z)-eicosapentaenoate + AH2 + O2 = (11R)-hydroxy-(5Z,8Z,12E,14Z,17Z)-eicosapentaenoate + A + H2O. It catalyses the reaction (5Z,8Z,11Z,14Z,17Z)-eicosapentaenoate + AH2 + O2 = (18S)-hydroxy-(5Z,8Z,11Z,14Z,16E)-eicosapentaenoate + A + H2O. The catalysed reaction is (5Z,8Z,11Z,14Z,17Z)-eicosapentaenoate + AH2 + O2 = (18R)-hydroxy-(5Z,8Z,11Z,14Z,16E)-eicosapentaenoate + A + H2O. It carries out the reaction (5Z,8Z,11Z,14Z,17Z)-eicosapentaenoate + AH2 + O2 = (15R)-hydroxy-(5Z,8Z,11Z,13E,17Z)-eicosapentaenoate + A + H2O. The enzyme catalyses (5Z,8Z,11Z,14Z,17Z)-eicosapentaenoate + AH2 + O2 = (15S)-hydroxy-(5Z,8Z,11Z,13E,17Z)-eicosapentaenoate + A + H2O. It catalyses the reaction (7Z,10Z,13Z,16Z,19Z)-docosapentaenoate + AH2 + O2 = 13R-hydroxy-(7Z,10Z,14E,16Z,19Z)-docosapentaenoate + A + H2O. The catalysed reaction is (4Z,7Z,10Z,13Z,16Z,19Z)-docosahexaenoate + AH2 + O2 = 13-hydroxy-(4Z,7Z,10Z,14E,16Z,19Z)-docosahexaenoate + A + H2O. It carries out the reaction (5S)-hydroxy-(6E,8Z,11Z,14Z)-eicosatetraenoate + AH2 + O2 = (5S,15R)-dihydroxy-(6E,8Z,11Z,13E)-eicosatetraenoate + A + H2O. The enzyme catalyses (4Z,7Z,10Z,13Z,16Z,19Z)-docosahexaenoate + AH2 + O2 = 17R-hydroxy-(4Z,7Z,10Z,13Z,15E,19Z)-docosahexaenoate + A + H2O. It catalyses the reaction (5S)-hydroxy-(6E,8Z,11Z,14Z)-eicosatetraenoate + AH2 + O2 = (5S,15S)-dihydroxy-(6E,8Z,11Z,13E)-eicosatetraenoate + A + H2O. The catalysed reaction is (5S)-hydroxy-(6E,8Z,11Z,14Z)-eicosatetraenoate + AH2 + O2 = (5S,11R)-dihydroxy-(6E,8Z,12E,14Z)-eicosatetraenoate + A + H2O. It carries out the reaction 2-(5Z,8Z,11Z,14Z-eicosatetraenoyl)-glycerol + 2 O2 = 2-glyceryl-prostaglandin G2. The enzyme catalyses 2-glyceryl-prostaglandin G2 + AH2 = 2-glyceryl-prostaglandin H2 + A + H2O. It catalyses the reaction (5Z,8Z,11Z,14Z)-eicosatetraenoate + O2 = (15R)-hydroperoxy-(5Z,8Z,11Z,13E)-eicosatetraenoate. The catalysed reaction is (5Z,8Z,11Z,14Z)-eicosatetraenoate + O2 = 11R-hydroperoxy-(5Z,8Z,12E,14Z)-eicosatetraenoate. It carries out the reaction (9Z,12Z)-octadecadienoate + AH2 + O2 = (9R)-hydroxy-(10E,12Z)-octadecadienoate + A + H2O. The enzyme catalyses (9Z,12Z)-octadecadienoate + AH2 + O2 = (9S)-hydroxy-(10E,12Z)-octadecadienoate + A + H2O. It catalyses the reaction (9Z,12Z)-octadecadienoate + AH2 + O2 = (13S)-hydroxy-(9Z,11E)-octadecadienoate + A + H2O. The catalysed reaction is (9Z,12Z)-octadecadienoate + AH2 + O2 = (13R)-hydroxy-(9Z,11E)-octadecadienoate + A + H2O. It participates in lipid metabolism; prostaglandin biosynthesis. Dual cyclooxygenase and peroxidase in the biosynthesis pathway of prostanoids, a class of C20 oxylipins mainly derived from arachidonate ((5Z,8Z,11Z,14Z)-eicosatetraenoate, AA, C20:4(n-6)), with a particular role in the inflammatory response. The cyclooxygenase activity oxygenates AA to the hydroperoxy endoperoxide prostaglandin G2 (PGG2), and the peroxidase activity reduces PGG2 to the hydroxy endoperoxide prostaglandin H2 (PGH2), the precursor of all 2-series prostaglandins and thromboxanes. This complex transformation is initiated by abstraction of hydrogen at carbon 13 (with S-stereochemistry), followed by insertion of molecular O2 to form the endoperoxide bridge between carbon 9 and 11 that defines prostaglandins. The insertion of a second molecule of O2 (bis-oxygenase activity) yields a hydroperoxy group in PGG2 that is then reduced to PGH2 by two electrons. Similarly catalyzes successive cyclooxygenation and peroxidation of dihomo-gamma-linoleate (DGLA, C20:3(n-6)) and eicosapentaenoate (EPA, C20:5(n-3)) to corresponding PGH1 and PGH3, the precursors of 1- and 3-series prostaglandins. In an alternative pathway of prostanoid biosynthesis, converts 2-arachidonoyl lysophopholipids to prostanoid lysophopholipids, which are then hydrolyzed by intracellular phospholipases to release free prostanoids. Metabolizes 2-arachidonoyl glycerol yielding the glyceryl ester of PGH2, a process that can contribute to pain response. Generates lipid mediators from n-3 and n-6 polyunsaturated fatty acids (PUFAs) via a lipoxygenase-type mechanism. Oxygenates PUFAs to hydroperoxy compounds and then reduces them to corresponding alcohols. Plays a role in the generation of resolution phase interaction products (resolvins) during both sterile and infectious inflammation. Metabolizes docosahexaenoate (DHA, C22:6(n-3)) to 17R-HDHA, a precursor of the D-series resolvins (RvDs). As a component of the biosynthetic pathway of E-series resolvins (RvEs), converts eicosapentaenoate (EPA, C20:5(n-3)) primarily to 18S-HEPE that is further metabolized by ALOX5 and LTA4H to generate 18S-RvE1 and 18S-RvE2. In vascular endothelial cells, converts docosapentaenoate (DPA, C22:5(n-3)) to 13R-HDPA, a precursor for 13-series resolvins (RvTs) shown to activate macrophage phagocytosis during bacterial infection. In activated leukocytes, contributes to oxygenation of hydroxyeicosatetraenoates (HETE) to diHETES (5,15-diHETE and 5,11-diHETE). Can also use linoleate (LA, (9Z,12Z)-octadecadienoate, C18:2(n-6)) as substrate and produce hydroxyoctadecadienoates (HODEs) in a regio- and stereospecific manner, being (9R)-HODE ((9R)-hydroxy-(10E,12Z)-octadecadienoate) and (13S)-HODE ((13S)-hydroxy-(9Z,11E)-octadecadienoate) its major products. During neuroinflammation, plays a role in neuronal secretion of specialized preresolving mediators (SPMs) 15R-lipoxin A4 that regulates phagocytic microglia. The chain is Prostaglandin G/H synthase 2 (PTGS2) from Neovison vison (American mink).